The sequence spans 596 residues: Arginine--tRNA ligase (596 aa).

Residues 123 to 133 (PNTNKPLHLGH) carry the 'HIGH' region motif.

This sequence belongs to the class-I aminoacyl-tRNA synthetase family. In terms of assembly, monomer.

Its subcellular location is the cytoplasm. It carries out the reaction tRNA(Arg) + L-arginine + ATP = L-arginyl-tRNA(Arg) + AMP + diphosphate. This chain is Arginine--tRNA ligase, found in Amoebophilus asiaticus (strain 5a2).